The primary structure comprises 525 residues: GMP synthase [glutamine-hydrolyzing] (525 aa).

Residues 9 to 207 enclose the Glutamine amidotransferase type-1 domain; the sequence is RILILDFGSQ…VRDICQCEAL (199 aa). Catalysis depends on C86, which acts as the Nucleophile. Residues H181 and E183 contribute to the active site. A GMPS ATP-PPase domain is found at 208–400; it reads WTPAKIIDDA…LGLPYDMLYR (193 aa). 235–241 contributes to the ATP binding site; it reads SGGVDSS.

As to quaternary structure, homodimer.

It carries out the reaction XMP + L-glutamine + ATP + H2O = GMP + L-glutamate + AMP + diphosphate + 2 H(+). It functions in the pathway purine metabolism; GMP biosynthesis; GMP from XMP (L-Gln route): step 1/1. Functionally, catalyzes the synthesis of GMP from XMP. In Shigella flexneri serotype 5b (strain 8401), this protein is GMP synthase [glutamine-hydrolyzing].